A 307-amino-acid polypeptide reads, in one-letter code: Melanoma-associated antigen F1 (307 aa).

Residues 1-55 form a disordered region; sequence MLQTPESRGLPVPQAEGEKDGGHDGETRAPTASQERPKEELGAGREEGAAEPALT. Composition is skewed to basic and acidic residues over residues 16–27 and 35–48; these read EGEKDGGHDGET and ERPKEELGAGREEG. The MAGE domain maps to 76–277; that stretch reads LNRTVAELVQ…HWPVQYREAL (202 aa).

As to quaternary structure, interacts (via MAGE domain) with RING-type zinc finger-containing E3 ubiquitin-protein ligases LNX1, TRIM27 and NSMCE1; the interaction is direct. Ubiquitous.

Enhances ubiquitin ligase activity of RING-type zinc finger-containing E3 ubiquitin ligases. Proposed to act through recruitment and/or stabilization of the E2 ubiquitin-conjugating enzyme at the E3:substrate complex. MAGEF1-NSMCE1 ubiquitin ligase complex promotes proteasomal degradation of MMS19, a key component of the cytosolic iron-sulfur protein assembly (CIA) machinery. Down-regulation of MMS19 impairs the activity of several DNA repair and metabolism enzymes such as ERCC2/XPD, FANCJ, RTEL1 and POLD1 that require iron-sulfur clusters as cofactors. May negatively regulate genome integrity by inhibiting homologous recombination-mediated double-strand break DNA repair. The sequence is that of Melanoma-associated antigen F1 from Homo sapiens (Human).